The following is a 72-amino-acid chain: UPF0495 protein KLLA0D04334g (72 aa).

Residues 20–42 (PVELTPLFLAMGVALASGTWFSY) form a helical membrane-spanning segment.

The protein belongs to the UPF0495 family.

It is found in the membrane. This is UPF0495 protein KLLA0D04334g from Kluyveromyces lactis (strain ATCC 8585 / CBS 2359 / DSM 70799 / NBRC 1267 / NRRL Y-1140 / WM37) (Yeast).